The sequence spans 291 residues: ATP synthase gamma chain (291 aa).

Belongs to the ATPase gamma chain family. As to quaternary structure, F-type ATPases have 2 components, CF(1) - the catalytic core - and CF(0) - the membrane proton channel. CF(1) has five subunits: alpha(3), beta(3), gamma(1), delta(1), epsilon(1). CF(0) has three main subunits: a, b and c.

It is found in the cell inner membrane. Produces ATP from ADP in the presence of a proton gradient across the membrane. The gamma chain is believed to be important in regulating ATPase activity and the flow of protons through the CF(0) complex. This is ATP synthase gamma chain from Burkholderia pseudomallei (strain 1106a).